The sequence spans 142 residues: Acidic phospholipase A2 Bc-PL (142 aa).

A signal peptide spans 1 to 9; it reads AVCVSLLGA. Positions 10-17 are excised as a propeptide; the sequence is ANIPPQPL. 7 disulfide bridges follow: C28–C94, C44–C141, C46–C62, C61–C122, C68–C115, C78–C108, and C101–C113. Positions 45, 47, and 49 each coordinate Ca(2+). H65 is a catalytic residue. D66 contributes to the Ca(2+) binding site. Residue D116 is part of the active site.

It belongs to the phospholipase A2 family. Group I subfamily. D49 sub-subfamily. It depends on Ca(2+) as a cofactor. Expressed by the venom gland.

It is found in the secreted. The catalysed reaction is a 1,2-diacyl-sn-glycero-3-phosphocholine + H2O = a 1-acyl-sn-glycero-3-phosphocholine + a fatty acid + H(+). In terms of biological role, PLA2 catalyzes the calcium-dependent hydrolysis of the 2-acyl groups in 3-sn-phosphoglycerides. The protein is Acidic phospholipase A2 Bc-PL of Bungarus candidus (Malayan krait).